The chain runs to 475 residues: UDP-N-acetylmuramate--L-alanine ligase (475 aa).

125–131 (GTHGKTS) contacts ATP.

Belongs to the MurCDEF family.

It is found in the cytoplasm. The enzyme catalyses UDP-N-acetyl-alpha-D-muramate + L-alanine + ATP = UDP-N-acetyl-alpha-D-muramoyl-L-alanine + ADP + phosphate + H(+). It functions in the pathway cell wall biogenesis; peptidoglycan biosynthesis. Cell wall formation. The polypeptide is UDP-N-acetylmuramate--L-alanine ligase (Mycolicibacterium gilvum (strain PYR-GCK) (Mycobacterium gilvum (strain PYR-GCK))).